A 320-amino-acid polypeptide reads, in one-letter code: uncharacterized protein (320 aa).

The interval 1–40 (MDHPSTSSLPRKKVKAGVKKAGKKTGKKTTGKKKTTPSAI) is disordered. A compositionally biased stretch (basic residues) spans 10-35 (PRKKVKAGVKKAGKKTGKKTTGKKKT). A helical membrane pass occupies residues 51 to 71 (LLVLLAVLSYLAALSLGLYIM). N-linked (GlcNAc...) asparagine glycans are attached at residues N92, N122, N154, and N167. A run of 2 helical transmembrane segments spans residues 186–206 (PLVH…AMTG) and 216–236 (MLVT…VTVL). The N-linked (GlcNAc...) asparagine glycan is linked to N247. Residues 272 to 292 (VQGALVAIVAVFYLTMGVVFV) traverse the membrane as a helical segment.

It localises to the membrane. Its pathway is secondary metabolite biosynthesis; terpenoid biosynthesis. Its function is as follows. Part of the gene cluster that mediates the biosynthesis of an ophiobolin family sesterterpenoid. This is an uncharacterized protein from Aspergillus terreus.